A 443-amino-acid polypeptide reads, in one-letter code: GTPase Der (443 aa).

EngA-type G domains lie at 3 to 168 (PLLA…PEAP) and 178 to 353 (VHLA…RNRS). GTP contacts are provided by residues 9–16 (GRPNVGKS), 56–60 (DTGGY), 120–123 (NKVE), 184–191 (GRPNVGKS), 231–235 (DTAGL), and 296–299 (NKWD). The region spanning 354–438 (QNVSTSQLNK…PISLRFLHKN (85 aa)) is the KH-like domain.

This sequence belongs to the TRAFAC class TrmE-Era-EngA-EngB-Septin-like GTPase superfamily. EngA (Der) GTPase family. Associates with the 50S ribosomal subunit.

GTPase that plays an essential role in the late steps of ribosome biogenesis. This chain is GTPase Der, found in Chlorobium chlorochromatii (strain CaD3).